Reading from the N-terminus, the 156-residue chain is Ribonuclease pancreatic (156 aa).

Positions Met1–Gly28 are cleaved as a signal peptide. The substrate site is built by Lys35 and Arg38. The active-site Proton acceptor is the His40. N-linked (GlcNAc...) asparagine glycans are attached at residues Asn50 and Asn62. Cystine bridges form between Cys54/Cys112, Cys68/Cys123, Cys86/Cys138, and Cys93/Cys100. Residues Lys69–Thr73 and Lys94 contribute to the substrate site. Asn104 carries an N-linked (GlcNAc...) asparagine glycan. Arg113 contacts substrate. His147 acts as the Proton donor in catalysis.

This sequence belongs to the pancreatic ribonuclease family. In terms of assembly, monomer. Interacts with and forms tight 1:1 complexes with RNH1. Dimerization of two such complexes may occur. Interaction with RNH1 inhibits this protein. Pancreas and other tissues and body fluids (indicating it may have other physiological functions besides its role in digestion).

The protein localises to the secreted. It catalyses the reaction an [RNA] containing cytidine + H2O = an [RNA]-3'-cytidine-3'-phosphate + a 5'-hydroxy-ribonucleotide-3'-[RNA].. It carries out the reaction an [RNA] containing uridine + H2O = an [RNA]-3'-uridine-3'-phosphate + a 5'-hydroxy-ribonucleotide-3'-[RNA].. In terms of biological role, endonuclease that catalyzes the cleavage of RNA on the 3' side of pyrimidine nucleotides. Acts on single-stranded and double-stranded RNA. The protein is Ribonuclease pancreatic (RNASE1) of Pongo pygmaeus (Bornean orangutan).